The sequence spans 480 residues: Prostacyclin synthase (480 aa).

The chain crosses the membrane as a helical span at residues 1-21; that stretch reads MMWTALLLVGLSILVIVLYGR. Residues Arg-104, Leu-110, Asn-277, 338 to 339, and Arg-362 each bind substrate; that span reads TR. Cys-421 serves as a coordination point for heme.

Belongs to the cytochrome P450 family. Heme is required as a cofactor.

Its subcellular location is the endoplasmic reticulum membrane. The catalysed reaction is prostaglandin H2 = prostaglandin I2. It carries out the reaction a hydroperoxyeicosatetraenoate = an oxoeicosatetraenoate + H2O. The enzyme catalyses (15S)-hydroperoxy-(5Z,8Z,11Z,13E)-eicosatetraenoate = 15-oxo-(5Z,8Z,11Z,13E)-eicosatetraenoate + H2O. It catalyses the reaction (15S)-hydroperoxy-(5Z,8Z,11Z,13E)-eicosatetraenoate + AH2 = (15S)-hydroxy-(5Z,8Z,11Z,13E)-eicosatetraenoate + A + H2O. Its function is as follows. Catalyzes the isomerization of prostaglandin H2 to prostacyclin (= prostaglandin I2). Catalyzes the biosynthesis and metabolism of eicosanoids. Catalyzes the isomerization of prostaglandin H2 to prostacyclin (= prostaglandin I2), a potent mediator of vasodilation and inhibitor of platelet aggregation. Additionally, displays dehydratase activity, toward hydroperoxyeicosatetraenoates (HPETEs), especially toward (15S)-hydroperoxy-(5Z,8Z,11Z,13E)-eicosatetraenoate (15(S)-HPETE). The chain is Prostacyclin synthase from Danio rerio (Zebrafish).